We begin with the raw amino-acid sequence, 429 residues long: MANVVVVGTQWGDEGKGKIVDWLSERADIVVRYQGGHNAGHTLVIDGVSYKLSLLPSGLVRGKLSIIGNGVVVDPHHFVAELKKLCDQGVKITPEILRIAENAPLILSLHRDLDAIRESGLSGLKIGTTKRGIGPAYEDKVGRRAIRVMDLAEKDTLMAKIERLLRHHNALRRGMGVAEIDSQALYDELMQVADKILPFMDCTWRLLDEGYREGKHILFEGAQGALLDNDFGTYPYVTSSNTVAGQACTGSGMGPGVIHYVLGIAKAYTTRVGEGPFPTEQINDIGEFLGTRGHEFGVVTGRKRRCGWFDAVLVRQMVAICGVQGIALTKLDVLDGLDEIKICIGYELDGRKIDYLPSSMGAQARVKPIYETLEGWKAKTAHTLRWEDLPVQAVKYIRYIEELINTKVALLSTSPEREDTILITDPFAN.

GTP-binding positions include 12-18 (GDEGKGK) and 40-42 (GHT). The Proton acceptor role is filled by D13. D13 and G40 together coordinate Mg(2+). IMP-binding positions include 13–16 (DEGK), 38–41 (NAGH), T129, R143, Q223, T238, and R302. H41 acts as the Proton donor in catalysis. Position 298–304 (298–304 (VVTGRKR)) interacts with substrate. Residues R304, 330–332 (KLD), and 412–414 (STS) each bind GTP.

This sequence belongs to the adenylosuccinate synthetase family. As to quaternary structure, homodimer. Requires Mg(2+) as cofactor.

It is found in the cytoplasm. It carries out the reaction IMP + L-aspartate + GTP = N(6)-(1,2-dicarboxyethyl)-AMP + GDP + phosphate + 2 H(+). Its pathway is purine metabolism; AMP biosynthesis via de novo pathway; AMP from IMP: step 1/2. Plays an important role in the de novo pathway of purine nucleotide biosynthesis. Catalyzes the first committed step in the biosynthesis of AMP from IMP. This chain is Adenylosuccinate synthetase, found in Bartonella tribocorum (strain CIP 105476 / IBS 506).